A 150-amino-acid polypeptide reads, in one-letter code: Deoxyuridine 5'-triphosphate nucleotidohydrolase (150 aa).

Residues 68–70, asparagine 81, 85–87, and lysine 95 each bind substrate; these read RSG and TID.

This sequence belongs to the dUTPase family. The cofactor is Mg(2+).

The enzyme catalyses dUTP + H2O = dUMP + diphosphate + H(+). It participates in pyrimidine metabolism; dUMP biosynthesis; dUMP from dCTP (dUTP route): step 2/2. This enzyme is involved in nucleotide metabolism: it produces dUMP, the immediate precursor of thymidine nucleotides and it decreases the intracellular concentration of dUTP so that uracil cannot be incorporated into DNA. The polypeptide is Deoxyuridine 5'-triphosphate nucleotidohydrolase (Rickettsia bellii (strain OSU 85-389)).